Reading from the N-terminus, the 423-residue chain is Cell adhesion molecule CEACAM16 (423 aa).

The N-terminal stretch at 1–22 (MKMPLTWGSWFLLSAWILNAGA) is a signal peptide. The N-linked (GlcNAc...) asparagine glycan is linked to Asn-38. Residues 77 to 96 (ETPGPAHTGREAVRPDGSLD) are disordered. Over residues 84–95 (TGREAVRPDGSL) the composition is skewed to basic and acidic residues. Ig-like C2-type domains lie at 134 to 219 (PPTV…LNLT) and 224 to 310 (PERV…ASVV). A disulfide bridge connects residues Cys-155 and Cys-202. Asn-217 is a glycosylation site (N-linked (GlcNAc...) asparagine). Cys-253 and Cys-294 form a disulfide bridge.

The protein belongs to the immunoglobulin superfamily. CEA family. Homooligomer; can for homodimers and homotetramers. Interacts with TECTA and TECTB.

It is found in the secreted. In terms of biological role, required for proper hearing, plays a role in maintaining the integrity of the tectorial membrane. This Rattus norvegicus (Rat) protein is Cell adhesion molecule CEACAM16.